The chain runs to 259 residues: MATATGVAEERLLAALAYLQCAVGCAVFARNRQTNSVYGRHALPSHRLRVPARAAWVVQELPSLALPLYQYASESAPRLRSAPNCILLAMFLVHYGHRCLIYPFLMRGGKPMPLLACTMAIMFCTCNGYLQSRYLSHCAVYADDWVTDPRFLIGFGLWLTGMLINIHSDHILRNLRKPGDTGYKIPRGGLFEYVTAANYFGEIMEWCGYALASWSVQGAAFAFFTFCFLSGRAKEHHEWYLRKFEEYPKFRKIIIPFLF.

A run of 5 helical transmembrane segments spans residues 12–29, 86–106, 111–131, 151–171, and 209–229; these read LLAALAYLQCAVGCAVFA, ILLAMFLVHYGHRCLIYPFLM, PMPLLACTMAIMFCTCNGYLQ, FLIGFGLWLTGMLINIHSDHI, and YALASWSVQGAAFAFFTFCFL.

It belongs to the steroid 5-alpha reductase family. In terms of tissue distribution, liver and prostate (at a low level).

It is found in the microsome membrane. It localises to the endoplasmic reticulum membrane. It catalyses the reaction a 3-oxo-5alpha-steroid + NADP(+) = a 3-oxo-Delta(4)-steroid + NADPH + H(+). The catalysed reaction is androst-4-ene-3,17-dione + NADPH + H(+) = 5alpha-androstan-3,17-dione + NADP(+). It carries out the reaction 5alpha-pregnane-3,20-dione + NADP(+) = progesterone + NADPH + H(+). The enzyme catalyses 17beta-hydroxy-5alpha-androstan-3-one + NADP(+) = testosterone + NADPH + H(+). In terms of biological role, converts testosterone into 5-alpha-dihydrotestosterone and progesterone or corticosterone into their corresponding 5-alpha-3-oxosteroids. It plays a central role in sexual differentiation and androgen physiology. In Homo sapiens (Human), this protein is 3-oxo-5-alpha-steroid 4-dehydrogenase 1.